The following is a 1434-amino-acid chain: DNA-directed RNA polymerase subunit beta' (1434 aa).

4 residues coordinate Zn(2+): C70, C72, C85, and C88. Mg(2+) is bound by residues D460, D462, and D464. Zn(2+) is bound by residues C840, C914, C921, and C924.

The protein belongs to the RNA polymerase beta' chain family. In terms of assembly, the RNAP catalytic core consists of 2 alpha, 1 beta, 1 beta' and 1 omega subunit. When a sigma factor is associated with the core the holoenzyme is formed, which can initiate transcription. Mg(2+) serves as cofactor. The cofactor is Zn(2+).

It catalyses the reaction RNA(n) + a ribonucleoside 5'-triphosphate = RNA(n+1) + diphosphate. Functionally, DNA-dependent RNA polymerase catalyzes the transcription of DNA into RNA using the four ribonucleoside triphosphates as substrates. In Tolumonas auensis (strain DSM 9187 / NBRC 110442 / TA 4), this protein is DNA-directed RNA polymerase subunit beta'.